We begin with the raw amino-acid sequence, 32 residues long: Photosystem I reaction center subunit XII (32 aa).

A helical membrane pass occupies residues 10–27 (VVALISALVTGILALRLG).

This sequence belongs to the PsaM family.

The protein localises to the plastid. It localises to the chloroplast thylakoid membrane. The chain is Photosystem I reaction center subunit XII from Zygnema circumcarinatum (Green alga).